The primary structure comprises 289 residues: Eukaryotic translation initiation factor 3 subunit G (289 aa).

2 disordered regions span residues 1 to 31 and 151 to 199; these read MSRL…VISN and DTMA…GEKM. The RRM domain maps to 209 to 287; it reads ATLRVTNVSE…LILRVEFAKK (79 aa).

The protein belongs to the eIF-3 subunit G family. Component of the eukaryotic translation initiation factor 3 (eIF-3) complex.

It is found in the cytoplasm. In terms of biological role, RNA-binding component of the eukaryotic translation initiation factor 3 (eIF-3) complex, which is involved in protein synthesis of a specialized repertoire of mRNAs and, together with other initiation factors, stimulates binding of mRNA and methionyl-tRNAi to the 40S ribosome. The eIF-3 complex specifically targets and initiates translation of a subset of mRNAs involved in cell proliferation. This subunit can bind 18S rRNA. The polypeptide is Eukaryotic translation initiation factor 3 subunit G (Coccidioides immitis (strain RS) (Valley fever fungus)).